The sequence spans 210 residues: Putative 3-methyladenine DNA glycosylase (210 aa).

This sequence belongs to the DNA glycosylase MPG family.

The protein is Putative 3-methyladenine DNA glycosylase of Lactobacillus acidophilus (strain ATCC 700396 / NCK56 / N2 / NCFM).